A 156-amino-acid chain; its full sequence is Small ribosomal subunit protein uS7 (156 aa).

Belongs to the universal ribosomal protein uS7 family. Part of the 30S ribosomal subunit. Contacts proteins S9 and S11.

One of the primary rRNA binding proteins, it binds directly to 16S rRNA where it nucleates assembly of the head domain of the 30S subunit. Is located at the subunit interface close to the decoding center, probably blocks exit of the E-site tRNA. In Streptomyces avermitilis (strain ATCC 31267 / DSM 46492 / JCM 5070 / NBRC 14893 / NCIMB 12804 / NRRL 8165 / MA-4680), this protein is Small ribosomal subunit protein uS7.